Here is a 348-residue protein sequence, read N- to C-terminus: Flap endonuclease 1 (348 aa).

The segment at 1-98 is N-domain; it reads MGLAELRELI…ETLERRRERK (98 aa). Positions 28, 80, 149, 151, 170, 172, and 234 each coordinate Mg(2+). Residues 113–256 are I-domain; the sequence is EREKYARQVA…RALQLIRKYG (144 aa). Residues 340-348 are interaction with PCNA; the sequence is RQETLDAFF.

It belongs to the XPG/RAD2 endonuclease family. FEN1 subfamily. Interacts with PCNA. PCNA stimulates the nuclease activity without altering cleavage specificity. Mg(2+) serves as cofactor.

In terms of biological role, structure-specific nuclease with 5'-flap endonuclease and 5'-3' exonuclease activities involved in DNA replication and repair. During DNA replication, cleaves the 5'-overhanging flap structure that is generated by displacement synthesis when DNA polymerase encounters the 5'-end of a downstream Okazaki fragment. Binds the unpaired 3'-DNA end and kinks the DNA to facilitate 5' cleavage specificity. Cleaves one nucleotide into the double-stranded DNA from the junction in flap DNA, leaving a nick for ligation. Also involved in the base excision repair (BER) pathway. Acts as a genome stabilization factor that prevents flaps from equilibrating into structures that lead to duplications and deletions. Also possesses 5'-3' exonuclease activity on nicked or gapped double-stranded DNA. The polypeptide is Flap endonuclease 1 (Methanopyrus kandleri (strain AV19 / DSM 6324 / JCM 9639 / NBRC 100938)).